The chain runs to 110 residues: Quaternary ammonium compound-resistance protein QacE (110 aa).

Transmembrane regions (helical) follow at residues 1–21, 30–50, 58–78, and 85–105; these read MKGWLFLVIAIVGEVIATSAL, LAPSAVVIIGYGIAFYFLSLV, VAYAVWSGLGVVIITAIAWLL, and AWGFVGMGLIVSGVVVLNLLS.

It belongs to the drug/metabolite transporter (DMT) superfamily. Small multidrug resistance (SMR) (TC 2.A.7.1) family.

The protein resides in the cell membrane. Functionally, multidrug exporter. Is implicated for the resistance to bacteriocidal quaternary ammonium compounds. This Escherichia coli protein is Quaternary ammonium compound-resistance protein QacE (qacE).